Here is a 541-residue protein sequence, read N- to C-terminus: Methyl-accepting chemotaxis protein PcaY (541 aa).

At 1–10 (MLANLKIRTG) the chain is on the cytoplasmic side. The chain crosses the membrane as a helical span at residues 11 to 31 (MFWVLSLFSLTLLFSTASAWW). Residues 32-189 (AAVGSDQQIT…ESDRRLARAQ (158 aa)) are Periplasmic-facing. Positions 35 to 187 (GSDQQITELD…MLESDRRLAR (153 aa)) are ligand-binding domain. A helical membrane pass occupies residues 190–210 (LLSLCLLGMTVVLAVLCWAFI). The Cytoplasmic segment spans residues 211-541 (AQRVLHPLRE…MTALVGRFKV (331 aa)). Residues 212 to 264 (QRVLHPLREAGGHFRRIASGDLSVPVQGQGNNEIGQLFHELQRMQQSQRDTLG) form the HAMP domain. The Methyl-accepting transducer domain occupies 269 to 505 (CARQLDAAAS…EVDRNLLNIR (237 aa)). The interval 322 to 341 (TSQTTSESNQLAAQSRRQVS) is disordered.

The protein belongs to the methyl-accepting chemotaxis (MCP) protein family.

It localises to the cell inner membrane. Its function is as follows. Chemotactic-signal transducers respond to changes in the concentration of attractants and repellents in the environment, transduce a signal from the outside to the inside of the cell, and facilitate sensory adaptation through the variation of the level of methylation. PcaY is responsible for the detection of multiple aromatic and hydroaromatic compounds that are metabolized through the beta-ketoadipate catabolic pathway, including vanillin, vanillate, 4-hydroxybenzoate (4-HBA), benzoate and protocatechuate. It also senses several nonmetabolizable aromatic compounds. This is Methyl-accepting chemotaxis protein PcaY from Pseudomonas putida (strain ATCC 700007 / DSM 6899 / JCM 31910 / BCRC 17059 / LMG 24140 / F1).